A 125-amino-acid polypeptide reads, in one-letter code: Large ribosomal subunit protein uL22c (125 aa).

This sequence belongs to the universal ribosomal protein uL22 family. As to quaternary structure, part of the 50S ribosomal subunit.

Its subcellular location is the plastid. It localises to the chloroplast. This protein binds specifically to 23S rRNA. In terms of biological role, the globular domain of the protein is located near the polypeptide exit tunnel on the outside of the subunit, while an extended beta-hairpin is found that lines the wall of the exit tunnel in the center of the 70S ribosome. This Nuphar advena (Common spatterdock) protein is Large ribosomal subunit protein uL22c (rpl22).